The following is a 173-amino-acid chain: ADP-ribosylation factor-like protein 11 (173 aa).

Residue Gly-2 is the site of N-myristoyl glycine attachment. Residues 17-24, 61-65, and 120-123 each bind GTP; these read GLDCAGKT, DIGGQ, and NKQE.

This sequence belongs to the small GTPase superfamily. Arf family.

In terms of biological role, may play a role in apoptosis. May act as a tumor suppressor. This Rattus norvegicus (Rat) protein is ADP-ribosylation factor-like protein 11 (Arl11).